The following is a 419-amino-acid chain: UDP-N-acetylglucosamine 1-carboxyvinyltransferase 2 (419 aa).

Residue 22–23 (KN) coordinates phosphoenolpyruvate. Arg-92 is a UDP-N-acetyl-alpha-D-glucosamine binding site. Cys-116 (proton donor) is an active-site residue. The residue at position 116 (Cys-116) is a 2-(S-cysteinyl)pyruvic acid O-phosphothioketal. Residues 121–125 (RPIDL), Asp-306, and Ile-328 contribute to the UDP-N-acetyl-alpha-D-glucosamine site.

Belongs to the EPSP synthase family. MurA subfamily.

The protein localises to the cytoplasm. The catalysed reaction is phosphoenolpyruvate + UDP-N-acetyl-alpha-D-glucosamine = UDP-N-acetyl-3-O-(1-carboxyvinyl)-alpha-D-glucosamine + phosphate. Its pathway is cell wall biogenesis; peptidoglycan biosynthesis. Functionally, cell wall formation. Adds enolpyruvyl to UDP-N-acetylglucosamine. The sequence is that of UDP-N-acetylglucosamine 1-carboxyvinyltransferase 2 from Streptococcus mutans serotype c (strain ATCC 700610 / UA159).